Here is a 496-residue protein sequence, read N- to C-terminus: Cytochrome P450 monooxygenase claT (496 aa).

Residues Leu2 to Val22 traverse the membrane as a helical segment. A heme-binding site is contributed by Cys423.

Belongs to the cytochrome P450 family. It depends on heme as a cofactor.

It is found in the membrane. It catalyses the reaction wigandol + 4 reduced [NADPH--hemoprotein reductase] + 4 O2 = arnebinol A + 4 oxidized [NADPH--hemoprotein reductase] + 6 H2O + 4 H(+). The catalysed reaction is arnebinol A + reduced [NADPH--hemoprotein reductase] + O2 = clavilactone A + oxidized [NADPH--hemoprotein reductase] + H2O + H(+). The enzyme catalyses (2E)-geranylhydroquinone + reduced [NADPH--hemoprotein reductase] + O2 = isoalliodorol + oxidized [NADPH--hemoprotein reductase] + H2O + H(+). The protein operates within secondary metabolite biosynthesis; terpenoid biosynthesis. Its function is as follows. Cytochrome P450 monooxygenase; part of the gene cluster that mediates the biosynthesis of clavilactone A, a meroterpenoid that features a unique benzo-fused ten-membered carbocyclic ring unit with an alpha,beta-epoxy-gamma-lactone moiety, forming an intriguing 10/5/3 tricyclic nested skeleton. ClaR, ClaS and ClaT are sufficient to produce clavilactone A. Within the pathway, claT acts as a multifunctional cytochrome P450 monooxygenase that catalyzes a ten-electron oxidation to accomplish the biosynthesis of the 10/5/3 tricyclic nested skeleton in clavilactones. The biosynthesis begins with the prenyltransferase claS that transfers geranyl pyrophosphate (GPP) to hydroquinone to produces geranylhydroquinone. The cytochrome P450 monooxygenase claR then catalyzes the diradical coupling reaction between the intramolecular hydroquinone and allyl moieties to form the benzo-fused ten-membered carbocyclic ring unit of wigantol. Finally the cytochrome P450 monooxygenase claT exquisitely and stereoselectively assembles the alpha,beta-epoxy-gamma-lactone moiety, producing clavilactone A via arnebinol A. The sequence is that of Cytochrome P450 monooxygenase claT from Ampulloclitocybe clavipes (Club foot).